The chain runs to 309 residues: Porphobilinogen deaminase (309 aa).

An S-(dipyrrolylmethanemethyl)cysteine modification is found at cysteine 243.

This sequence belongs to the HMBS family. Monomer. The cofactor is dipyrromethane.

It catalyses the reaction 4 porphobilinogen + H2O = hydroxymethylbilane + 4 NH4(+). The protein operates within porphyrin-containing compound metabolism; protoporphyrin-IX biosynthesis; coproporphyrinogen-III from 5-aminolevulinate: step 2/4. Its function is as follows. Tetrapolymerization of the monopyrrole PBG into the hydroxymethylbilane pre-uroporphyrinogen in several discrete steps. The polypeptide is Porphobilinogen deaminase (hemC) (Deinococcus radiodurans (strain ATCC 13939 / DSM 20539 / JCM 16871 / CCUG 27074 / LMG 4051 / NBRC 15346 / NCIMB 9279 / VKM B-1422 / R1)).